Reading from the N-terminus, the 348-residue chain is Protein RecA (348 aa).

65-72 (GPESSGKT) contributes to the ATP binding site. The segment at 326–348 (QMGSESLSSSSDDDDIKEESGEE) is disordered. The segment covering 336–348 (SDDDDIKEESGEE) has biased composition (acidic residues).

The protein belongs to the RecA family.

The protein resides in the cytoplasm. Functionally, can catalyze the hydrolysis of ATP in the presence of single-stranded DNA, the ATP-dependent uptake of single-stranded DNA by duplex DNA, and the ATP-dependent hybridization of homologous single-stranded DNAs. It interacts with LexA causing its activation and leading to its autocatalytic cleavage. The sequence is that of Protein RecA from Campylobacter hominis (strain ATCC BAA-381 / DSM 21671 / CCUG 45161 / LMG 19568 / NCTC 13146 / CH001A).